A 221-amino-acid chain; its full sequence is UPF0758 protein YicR (221 aa).

The MPN domain occupies 99–221; the sequence is ALLSPEMTLE…YVSFAERGWI (123 aa). Zn(2+) is bound by residues histidine 170, histidine 172, and aspartate 183. The JAMM motif signature appears at 170–183; that stretch reads HNHPSGCAEPSKAD.

This sequence belongs to the UPF0758 family. YicR subfamily.

The chain is UPF0758 protein YicR from Salmonella arizonae (strain ATCC BAA-731 / CDC346-86 / RSK2980).